The primary structure comprises 146 residues: DNA-directed RNA polymerases II, IV and V subunit 8B (146 aa).

The protein belongs to the eukaryotic RPB8 RNA polymerase subunit family. In terms of assembly, component of the RNA polymerase II, IV and V complexes. Associates with the mediator complex.

Its subcellular location is the nucleus. In terms of biological role, DNA-dependent RNA polymerase catalyzes the transcription of DNA into RNA using the four ribonucleoside triphosphates as substrates. Component of RNA polymerase II which synthesizes mRNA precursors and many functional non-coding RNAs. Pol II is the central component of the basal RNA polymerase II transcription machinery. It is composed of mobile elements that move relative to each other. Component of RNA polymerases IV and V which mediate short-interfering RNAs (siRNA) accumulation and subsequent RNA-directed DNA methylation-dependent (RdDM) transcriptional gene silencing (TGS) of endogenous repeated sequences, including transposable elements. This Arabidopsis thaliana (Mouse-ear cress) protein is DNA-directed RNA polymerases II, IV and V subunit 8B (NRPB8B).